Consider the following 119-residue polypeptide: Beta-2-microglobulin (119 aa).

A signal peptide spans 1-20 (MARTVATFFLMLVSLACLDA). The Ig-like C1-type domain occupies 25 to 114 (PQVQVYTRHP…VTLKEPKVVT (90 aa)). Cysteine 45 and cysteine 100 are disulfide-bonded.

It belongs to the beta-2-microglobulin family. In terms of assembly, heterodimer of an alpha chain and a beta chain. Beta-2-microglobulin is the beta-chain of major histocompatibility complex class I molecules.

The protein localises to the secreted. Its function is as follows. Component of the class I major histocompatibility complex (MHC). Involved in the presentation of peptide antigens to the immune system. This is Beta-2-microglobulin (B2M) from Sigmodon hispidus (Hispid cotton rat).